The sequence spans 291 residues: 2-C-methyl-D-erythritol 4-phosphate cytidylyltransferase (291 aa).

The segment at 1-23 (MTERDFDTPVETPTVQPAPAQGA) is disordered.

It belongs to the IspD/TarI cytidylyltransferase family. IspD subfamily.

The enzyme catalyses 2-C-methyl-D-erythritol 4-phosphate + CTP + H(+) = 4-CDP-2-C-methyl-D-erythritol + diphosphate. It participates in isoprenoid biosynthesis; isopentenyl diphosphate biosynthesis via DXP pathway; isopentenyl diphosphate from 1-deoxy-D-xylulose 5-phosphate: step 2/6. In terms of biological role, catalyzes the formation of 4-diphosphocytidyl-2-C-methyl-D-erythritol from CTP and 2-C-methyl-D-erythritol 4-phosphate (MEP). This chain is 2-C-methyl-D-erythritol 4-phosphate cytidylyltransferase, found in Bifidobacterium longum (strain DJO10A).